The sequence spans 215 residues: 3-isopropylmalate dehydratase small subunit (215 aa).

Belongs to the LeuD family. LeuD type 1 subfamily. As to quaternary structure, heterodimer of LeuC and LeuD.

The catalysed reaction is (2R,3S)-3-isopropylmalate = (2S)-2-isopropylmalate. It functions in the pathway amino-acid biosynthesis; L-leucine biosynthesis; L-leucine from 3-methyl-2-oxobutanoate: step 2/4. In terms of biological role, catalyzes the isomerization between 2-isopropylmalate and 3-isopropylmalate, via the formation of 2-isopropylmaleate. The protein is 3-isopropylmalate dehydratase small subunit of Xylella fastidiosa (strain 9a5c).